The sequence spans 290 residues: ATP synthase gamma chain (290 aa).

The protein belongs to the ATPase gamma chain family. F-type ATPases have 2 components, CF(1) - the catalytic core - and CF(0) - the membrane proton channel. CF(1) has five subunits: alpha(3), beta(3), gamma(1), delta(1), epsilon(1). CF(0) has three main subunits: a, b and c.

Its subcellular location is the cell membrane. Produces ATP from ADP in the presence of a proton gradient across the membrane. The gamma chain is believed to be important in regulating ATPase activity and the flow of protons through the CF(0) complex. This is ATP synthase gamma chain from Listeria innocua serovar 6a (strain ATCC BAA-680 / CLIP 11262).